The chain runs to 972 residues: DNA cross-link repair 1A protein (972 aa).

The disordered stretch occupies residues 14-80 (YKSIRKRKPQ…SEDLDPCKDD (67 aa)). Over residues 23–37 (QSNPDSTSVSMQTVT) the composition is skewed to polar residues. The segment covering 39 to 54 (GKCRPKRKGSGNRKKS) has biased composition (basic residues). The span at 64-80 (SEQRLRPSEDLDPCKDD) shows a compositional bias: basic and acidic residues. The segment at 105 to 135 (DGYCPSCQMPFSLLVVQTPRWHVAECLDTPG) adopts a UBZ4-type zinc-finger fold. Cys108, Cys111, His126, and Cys130 together coordinate Zn(2+). Disordered regions lie at residues 191-219 (KSSC…NNEC) and 552-623 (GEAC…TTDE). Over residues 210–219 (NLKNVPNNEC) the composition is skewed to polar residues.

This sequence belongs to the DNA repair metallo-beta-lactamase (DRMBL) family. Binds PIAS1.

It is found in the nucleus. It carries out the reaction a beta-lactam + H2O = a substituted beta-amino acid. Its function is as follows. May be required for DNA interstrand cross-link repair. The polypeptide is DNA cross-link repair 1A protein (DCLRE1A) (Gallus gallus (Chicken)).